A 147-amino-acid chain; its full sequence is 3-hydroxyacyl-[acyl-carrier-protein] dehydratase FabZ (147 aa).

The active site involves His-49.

This sequence belongs to the thioester dehydratase family. FabZ subfamily.

The protein resides in the cytoplasm. It catalyses the reaction a (3R)-hydroxyacyl-[ACP] = a (2E)-enoyl-[ACP] + H2O. In terms of biological role, involved in unsaturated fatty acids biosynthesis. Catalyzes the dehydration of short chain beta-hydroxyacyl-ACPs and long chain saturated and unsaturated beta-hydroxyacyl-ACPs. The protein is 3-hydroxyacyl-[acyl-carrier-protein] dehydratase FabZ of Syntrophotalea carbinolica (strain DSM 2380 / NBRC 103641 / GraBd1) (Pelobacter carbinolicus).